Consider the following 431-residue polypeptide: Interleukin-11 receptor subunit alpha (431 aa).

The first 23 residues, Met-1–Ser-23, serve as a signal peptide directing secretion. The Extracellular segment spans residues Thr-24–Ala-371. An Ig-like C2-type domain is found at Pro-27 to Gly-110. Intrachain disulfides connect Cys-48-Cys-94, Cys-120-Cys-130, and Cys-170-Cys-180. Fibronectin type-III domains follow at residues Pro-112 to Asp-219 and Pro-220 to Thr-317. N-linked (GlcNAc...) asparagine glycosylation is present at Asn-127. A disordered region spans residues Lys-151–Cys-170. Asn-194 carries N-linked (GlcNAc...) asparagine glycosylation. Residues Trp-304–Ser-308 carry the WSXWS motif motif. Residues Glu-310–His-360 are disordered. A compositionally biased stretch (basic and acidic residues) spans Leu-320–Leu-335. Residues Pro-344–Pro-355 show a composition bias toward pro residues. Residues Ser-372–Leu-392 form a helical membrane-spanning segment. Residues Arg-393–Ser-431 are Cytoplasmic-facing. The segment at Pro-402 to Ser-431 is disordered.

It belongs to the type I cytokine receptor family. Type 3 subfamily. As to quaternary structure, on IL11 binding, forms a multimer complex with IL6ST/gp130. A short soluble form is also released from the membrane by proteolysis. The sIL11RA is formed either by limited proteolysis of membrane-bound receptors, a process referred to as ectodomain shedding, or directly secreted from the cells after alternative mRNA splicing. mIL11RA is cleaved by the proteases ADAM10, ELANE and PRTN3.

The protein localises to the membrane. Its subcellular location is the secreted. Functionally, receptor for interleukin-11 (IL11). The receptor systems for IL6, LIF, OSM, CNTF, IL11 and CT1 can utilize IL6ST for initiating signal transmission. The IL11/IL11RA/IL6ST complex may be involved in the control of proliferation and/or differentiation of skeletogenic progenitor or other mesenchymal cells. Essential for the normal development of craniofacial bones and teeth. Restricts suture fusion and tooth number. Soluble form of IL11 receptor (sIL11RA) that acts as an agonist of IL11 activity. The IL11:sIL11RA complex binds to IL6ST/gp130 on cell surfaces and induces signaling also on cells that do not express membrane-bound IL11RA in a process called IL11 trans-signaling. The sequence is that of Interleukin-11 receptor subunit alpha from Rattus norvegicus (Rat).